Here is an 840-residue protein sequence, read N- to C-terminus: MSAPPRLSARLSVLDQKKSNAPSPTSPTGLKTSLGMPPNSGSSGGGGGLKSSVGISSLPTIPSTKSTSPTLPKRNSANLSLLQQQQQQHTNKSTSPSSNTPTATSTTSPFSYLGKQASAQNLNTMMSMMMLNKNPLSPVVPQPGASLFYATPTEADDEEFEHIRNLLNSEYSVTTVQSTGALKSSNLVVMSWKNNATSELTEQDDQLENDKRDLQFIKEQLEKNNSMSKQMIYILDRFNEGLSQLEMDVAPINASMNEWSSIFNNINSTMEQVKSVLDKFDVDKIDSKINDGAKGDYVSYMLALEHVGNAIDYIAEKSHFKSSDKVMDALKQLKATGLNELETSFKSLLLKISNLVDPTTIAKLPNSKRYLAIILPNHVEEISKYIELFEKLHYNAFLKEYKDKRSKFILLSLRKMAPEKFIKQTSETKNLAYVKGSHPLISYVQETLRLYQIEYDLASELFGNQYQLILDEIIDPAHELLLETTEPIIKVRKTPGDKIFSIFPLLDLFDTFTKLLPDFITAISSRDGKHISELKTQIKHLQDTCASLLDFSLDEEKEISSSNRKEIISDATVDEISSNMINYFKRLIEYKHSVELLLKGQDNNNSNSNSNAPSSTSSNSKSSSSSSSSSSSNSASSTILPTSFIGFLEKILKNLIKYLQGRAKKDFPTQPATDFFKPPIKSVIFQINNYHYISTSLKQSKILSNQQFENNELASANHILHEFETCLDNEIKVLNSFWKTIADILITNKSNKEKDEVKSIIKKHTNFLKTFNDLNKLKFDIPDQELKLKLKTEAKNIIGRSYDQFKELCRLEKIHLEKNFVPFETTDDINRKLDRVFDSQ.

Positions 1–112 (MSAPPRLSAR…ATSTTSPFSY (112 aa)) are disordered. Residues 19 to 31 (SNAPSPTSPTGLK) show a composition bias toward polar residues. Composition is skewed to low complexity over residues 50–73 (KSSV…TLPK) and 83–111 (QQQQ…SPFS). Residues 193–227 (KNNATSELTEQDDQLENDKRDLQFIKEQLEKNNSM) are a coiled coil. Positions 601 to 638 (QDNNNSNSNSNAPSSTSSNSKSSSSSSSSSSSNSASST) are disordered. A compositionally biased stretch (low complexity) spans 603–637 (NNNSNSNSNAPSSTSSNSKSSSSSSSSSSSNSASS).

Belongs to the EXO70 family. In terms of assembly, the exocyst complex is composed of sec3/exoc1, sec5/exoc2, sec6/exoc3, sec8/exoc4, sec10/exoc5, sec15/exoc6, exo70/exoc7 and exo84/exoc8.

It localises to the cytoplasm. The protein localises to the cytosol. The protein resides in the cell membrane. It is found in the midbody. Its subcellular location is the midbody ring. Functionally, component of the exocyst complex involved in the docking of exocytic vesicles with fusion sites on the plasma membrane. The protein is Exocyst complex component 7 (exoc7) of Dictyostelium discoideum (Social amoeba).